The primary structure comprises 291 residues: Lipoyl synthase (291 aa).

Positions 35, 40, 46, 61, 65, 68, and 273 each coordinate [4Fe-4S] cluster. A Radical SAM core domain is found at 47 to 262 (FGKRQATFLI…KERALTMGFE (216 aa)).

The protein belongs to the radical SAM superfamily. Lipoyl synthase family. The cofactor is [4Fe-4S] cluster.

The protein resides in the cytoplasm. The enzyme catalyses [[Fe-S] cluster scaffold protein carrying a second [4Fe-4S](2+) cluster] + N(6)-octanoyl-L-lysyl-[protein] + 2 oxidized [2Fe-2S]-[ferredoxin] + 2 S-adenosyl-L-methionine + 4 H(+) = [[Fe-S] cluster scaffold protein] + N(6)-[(R)-dihydrolipoyl]-L-lysyl-[protein] + 4 Fe(3+) + 2 hydrogen sulfide + 2 5'-deoxyadenosine + 2 L-methionine + 2 reduced [2Fe-2S]-[ferredoxin]. It participates in protein modification; protein lipoylation via endogenous pathway; protein N(6)-(lipoyl)lysine from octanoyl-[acyl-carrier-protein]: step 2/2. Catalyzes the radical-mediated insertion of two sulfur atoms into the C-6 and C-8 positions of the octanoyl moiety bound to the lipoyl domains of lipoate-dependent enzymes, thereby converting the octanoylated domains into lipoylated derivatives. The polypeptide is Lipoyl synthase (Citrifermentans bemidjiense (strain ATCC BAA-1014 / DSM 16622 / JCM 12645 / Bem) (Geobacter bemidjiensis)).